We begin with the raw amino-acid sequence, 120 residues long: NAD(P)H-quinone oxidoreductase subunit 3, chloroplastic (120 aa).

The next 3 membrane-spanning stretches (helical) occupy residues 9–29 (IFWTFLIIASLIPILAFSISG), 64–84 (MFALVFVVFDVETVFLYPWAM), and 88–108 (VLGVSVFIEALIFVLILVVGL).

It belongs to the complex I subunit 3 family. NDH is composed of at least 16 different subunits, 5 of which are encoded in the nucleus.

The protein localises to the plastid. The protein resides in the chloroplast thylakoid membrane. It carries out the reaction a plastoquinone + NADH + (n+1) H(+)(in) = a plastoquinol + NAD(+) + n H(+)(out). The enzyme catalyses a plastoquinone + NADPH + (n+1) H(+)(in) = a plastoquinol + NADP(+) + n H(+)(out). Its function is as follows. NDH shuttles electrons from NAD(P)H:plastoquinone, via FMN and iron-sulfur (Fe-S) centers, to quinones in the photosynthetic chain and possibly in a chloroplast respiratory chain. The immediate electron acceptor for the enzyme in this species is believed to be plastoquinone. Couples the redox reaction to proton translocation, and thus conserves the redox energy in a proton gradient. The chain is NAD(P)H-quinone oxidoreductase subunit 3, chloroplastic from Hordeum vulgare (Barley).